A 129-amino-acid chain; its full sequence is UPF0325 protein Ent638_0703 (129 aa).

Belongs to the UPF0325 family.

The chain is UPF0325 protein Ent638_0703 from Enterobacter sp. (strain 638).